A 585-amino-acid chain; its full sequence is Zinc finger protein C11D3.17 (585 aa).

2 consecutive C2H2-type zinc fingers follow at residues 31–53 and 59–82; these read FPCDQCAKRFTRHENLTRHKACH and IPCPYCEIKCKRKDLLKRHIQRFH. Position 553 is a phosphothreonine (threonine 553).

The protein resides in the nucleus. This is Zinc finger protein C11D3.17 from Schizosaccharomyces pombe (strain 972 / ATCC 24843) (Fission yeast).